A 325-amino-acid polypeptide reads, in one-letter code: NADH-quinone oxidoreductase subunit H (325 aa).

8 consecutive transmembrane segments (helical) span residues 5–25, 75–95, 117–137, 157–177, 190–210, 240–260, 268–288, and 305–325; these read LIIILIKSAVVILLLFTAAAY, FVYWLAPGISLFTALFIFVLI, VGVVFLLAFSSLAVYGVVLAG, ISYEIPMGLSLLTVVLSTGTL, WLIWTNPISFIIYFITSFAET, FFLGEYINILAVSAIATTLFF, DIPILWFGLKVAIFVFIFMWV, and WKVLIPIAILNLIITAYFTLV.

It belongs to the complex I subunit 1 family. In terms of assembly, NDH-1 is composed of 14 different subunits. Subunits NuoA, H, J, K, L, M, N constitute the membrane sector of the complex.

It localises to the cell inner membrane. The catalysed reaction is a quinone + NADH + 5 H(+)(in) = a quinol + NAD(+) + 4 H(+)(out). Functionally, NDH-1 shuttles electrons from NADH, via FMN and iron-sulfur (Fe-S) centers, to quinones in the respiratory chain. The immediate electron acceptor for the enzyme in this species is believed to be ubiquinone. Couples the redox reaction to proton translocation (for every two electrons transferred, four hydrogen ions are translocated across the cytoplasmic membrane), and thus conserves the redox energy in a proton gradient. This subunit may bind ubiquinone. The sequence is that of NADH-quinone oxidoreductase subunit H from Protochlamydia amoebophila (strain UWE25).